We begin with the raw amino-acid sequence, 126 residues long: Profilin-2 (126 aa).

Blocked amino end (Ser) is present on S2. K104 is subject to N6,N6,N6-trimethyllysine.

The protein belongs to the profilin family. Occurs in many kinds of cells as a complex with monomeric actin in a 1:1 ratio.

It localises to the cytoplasm. The protein resides in the cytoskeleton. Its function is as follows. Binds to actin and affects the structure of the cytoskeleton. At high concentrations, profilin prevents the polymerization of actin, whereas it enhances it at low concentrations. By binding to PIP2, it inhibits the formation of IP3 and DG. This Acanthamoeba castellanii (Amoeba) protein is Profilin-2.